The following is a 102-amino-acid chain: Small ribosomal subunit protein uS10 (102 aa).

Belongs to the universal ribosomal protein uS10 family. Part of the 30S ribosomal subunit.

In terms of biological role, involved in the binding of tRNA to the ribosomes. This is Small ribosomal subunit protein uS10 from Clostridium kluyveri (strain NBRC 12016).